Reading from the N-terminus, the 376-residue chain is uncharacterized protein (376 aa).

A helical membrane pass occupies residues 19–39; the sequence is FVLISLILLLNLGLLLGIQIY.

It to S.pombe SpAC5H10.12c.

It localises to the cytoplasm. Its subcellular location is the nucleus. It is found in the membrane. This is an uncharacterized protein from Schizosaccharomyces pombe (strain 972 / ATCC 24843) (Fission yeast).